A 636-amino-acid chain; its full sequence is 1-deoxy-D-xylulose-5-phosphate synthase (636 aa).

Residues histidine 72 and 113-115 (GHA) contribute to the thiamine diphosphate site. Aspartate 144 provides a ligand contact to Mg(2+). Thiamine diphosphate-binding positions include 145–146 (GS), asparagine 174, tyrosine 287, and glutamate 370. Asparagine 174 is a binding site for Mg(2+).

Belongs to the transketolase family. DXPS subfamily. As to quaternary structure, homodimer. Mg(2+) serves as cofactor. Thiamine diphosphate is required as a cofactor.

The enzyme catalyses D-glyceraldehyde 3-phosphate + pyruvate + H(+) = 1-deoxy-D-xylulose 5-phosphate + CO2. The protein operates within metabolic intermediate biosynthesis; 1-deoxy-D-xylulose 5-phosphate biosynthesis; 1-deoxy-D-xylulose 5-phosphate from D-glyceraldehyde 3-phosphate and pyruvate: step 1/1. Catalyzes the acyloin condensation reaction between C atoms 2 and 3 of pyruvate and glyceraldehyde 3-phosphate to yield 1-deoxy-D-xylulose-5-phosphate (DXP). This Synechococcus elongatus (strain ATCC 33912 / PCC 7942 / FACHB-805) (Anacystis nidulans R2) protein is 1-deoxy-D-xylulose-5-phosphate synthase.